The following is a 274-amino-acid chain: NADPH-dependent 7-cyano-7-deazaguanine reductase (274 aa).

80 to 82 is a binding site for substrate; sequence VES. 82–83 is an NADPH binding site; sequence SK. C181 acts as the Thioimide intermediate in catalysis. Catalysis depends on D188, which acts as the Proton donor. 220–221 is a binding site for substrate; the sequence is HE. 249-250 contributes to the NADPH binding site; that stretch reads RG.

It belongs to the GTP cyclohydrolase I family. QueF type 2 subfamily. Homodimer.

It is found in the cytoplasm. The enzyme catalyses 7-aminomethyl-7-carbaguanine + 2 NADP(+) = 7-cyano-7-deazaguanine + 2 NADPH + 3 H(+). The protein operates within tRNA modification; tRNA-queuosine biosynthesis. Catalyzes the NADPH-dependent reduction of 7-cyano-7-deazaguanine (preQ0) to 7-aminomethyl-7-deazaguanine (preQ1). This is NADPH-dependent 7-cyano-7-deazaguanine reductase from Paraburkholderia phytofirmans (strain DSM 17436 / LMG 22146 / PsJN) (Burkholderia phytofirmans).